A 318-amino-acid polypeptide reads, in one-letter code: Phosphoenolpyruvate transferase (318 aa).

Asp-50 contacts 7,8-didemethyl-8-hydroxy-5-deazariboflavin.

Belongs to the CofD family. As to quaternary structure, homodimer. Mg(2+) is required as a cofactor.

The catalysed reaction is enolpyruvoyl-2-diphospho-5'-guanosine + 7,8-didemethyl-8-hydroxy-5-deazariboflavin = dehydro coenzyme F420-0 + GMP + H(+). It functions in the pathway cofactor biosynthesis; coenzyme F420 biosynthesis. Its function is as follows. Catalyzes the transfer of the phosphoenolpyruvate moiety from enoylpyruvoyl-2-diphospho-5'-guanosine (EPPG) to 7,8-didemethyl-8-hydroxy-5-deazariboflavin (FO) with the formation of dehydro coenzyme F420-0 and GMP. In Streptomyces griseus subsp. griseus (strain JCM 4626 / CBS 651.72 / NBRC 13350 / KCC S-0626 / ISP 5235), this protein is Phosphoenolpyruvate transferase.